We begin with the raw amino-acid sequence, 377 residues long: Histidinol-phosphate aminotransferase 2 (377 aa).

A disordered region spans residues 17–44; that stretch reads NLSPYVPGEQPQHDDLCKLNTNENPFPP. K228 is modified (N6-(pyridoxal phosphate)lysine).

It belongs to the class-II pyridoxal-phosphate-dependent aminotransferase family. Histidinol-phosphate aminotransferase subfamily. In terms of assembly, homodimer. The cofactor is pyridoxal 5'-phosphate.

It catalyses the reaction L-histidinol phosphate + 2-oxoglutarate = 3-(imidazol-4-yl)-2-oxopropyl phosphate + L-glutamate. Its pathway is amino-acid biosynthesis; L-histidine biosynthesis; L-histidine from 5-phospho-alpha-D-ribose 1-diphosphate: step 7/9. This chain is Histidinol-phosphate aminotransferase 2, found in Psychrobacter arcticus (strain DSM 17307 / VKM B-2377 / 273-4).